Reading from the N-terminus, the 277-residue chain is PTS system sorbose-specific EIIC component (277 aa).

The next 5 helical transmembrane spans lie at 1-21 (MAIS…VGMG), 92-112 (IQKG…LTVL), 133-153 (FTAI…RVSI), 177-197 (VITG…YAMI), and 219-239 (YLKL…IVYV). Positions 3–237 (ISTIQIILIF…GAVGLIFAIV (235 aa)) constitute a PTS EIIC type-4 domain.

Its subcellular location is the cell membrane. Functionally, the phosphoenolpyruvate-dependent sugar phosphotransferase system (PTS), a major carbohydrate active transport system, catalyzes the phosphorylation of incoming sugar substrates concomitant with their translocation across the cell membrane. The enzyme II SorABCD PTS system is involved in L-sorbose transport. The sequence is that of PTS system sorbose-specific EIIC component from Lacticaseibacillus casei (Lactobacillus casei).